We begin with the raw amino-acid sequence, 338 residues long: Holliday junction branch migration complex subunit RuvB (338 aa).

The tract at residues Met-1–Tyr-181 is large ATPase domain (RuvB-L). ATP contacts are provided by residues Leu-20, Arg-21, Gly-62, Lys-65, Thr-66, Thr-67, Glu-128–Phe-130, Arg-171, Tyr-181, and Arg-218. Mg(2+) is bound at residue Thr-66. The tract at residues Ser-182–Gly-252 is small ATPAse domain (RuvB-S). The segment at Glu-255–Val-338 is head domain (RuvB-H). Positions 310 and 315 each coordinate DNA.

The protein belongs to the RuvB family. As to quaternary structure, homohexamer. Forms an RuvA(8)-RuvB(12)-Holliday junction (HJ) complex. HJ DNA is sandwiched between 2 RuvA tetramers; dsDNA enters through RuvA and exits via RuvB. An RuvB hexamer assembles on each DNA strand where it exits the tetramer. Each RuvB hexamer is contacted by two RuvA subunits (via domain III) on 2 adjacent RuvB subunits; this complex drives branch migration. In the full resolvosome a probable DNA-RuvA(4)-RuvB(12)-RuvC(2) complex forms which resolves the HJ.

The protein resides in the cytoplasm. The enzyme catalyses ATP + H2O = ADP + phosphate + H(+). Its function is as follows. The RuvA-RuvB-RuvC complex processes Holliday junction (HJ) DNA during genetic recombination and DNA repair, while the RuvA-RuvB complex plays an important role in the rescue of blocked DNA replication forks via replication fork reversal (RFR). RuvA specifically binds to HJ cruciform DNA, conferring on it an open structure. The RuvB hexamer acts as an ATP-dependent pump, pulling dsDNA into and through the RuvAB complex. RuvB forms 2 homohexamers on either side of HJ DNA bound by 1 or 2 RuvA tetramers; 4 subunits per hexamer contact DNA at a time. Coordinated motions by a converter formed by DNA-disengaged RuvB subunits stimulates ATP hydrolysis and nucleotide exchange. Immobilization of the converter enables RuvB to convert the ATP-contained energy into a lever motion, pulling 2 nucleotides of DNA out of the RuvA tetramer per ATP hydrolyzed, thus driving DNA branch migration. The RuvB motors rotate together with the DNA substrate, which together with the progressing nucleotide cycle form the mechanistic basis for DNA recombination by continuous HJ branch migration. Branch migration allows RuvC to scan DNA until it finds its consensus sequence, where it cleaves and resolves cruciform DNA. This chain is Holliday junction branch migration complex subunit RuvB, found in Caldanaerobacter subterraneus subsp. tengcongensis (strain DSM 15242 / JCM 11007 / NBRC 100824 / MB4) (Thermoanaerobacter tengcongensis).